We begin with the raw amino-acid sequence, 65 residues long: Small ribosomal subunit protein bS21 (65 aa).

Residues 45–65 (GRLKRSRSRRRAQRANEERNS) are disordered. Residues 48–57 (KRSRSRRRAQ) are compositionally biased toward basic residues.

Belongs to the bacterial ribosomal protein bS21 family.

The chain is Small ribosomal subunit protein bS21 from Chlorobium phaeobacteroides (strain DSM 266 / SMG 266 / 2430).